Here is a 150-residue protein sequence, read N- to C-terminus: Ribonuclease K6 (150 aa).

A signal peptide spans 1–23 (MVLCFPLLLLLLVLWGQVCPLHA). The active-site Proton acceptor is H38. Disulfide bonds link C46–C104, C60–C114, C78–C129, and C85–C92. An N-linked (GlcNAc...) asparagine glycan is attached at N55. Substrate-binding positions include 61–65 (KPQNT) and K86. N100 carries N-linked (GlcNAc...) asparagine glycosylation. R105 is a binding site for substrate. H145 acts as the Proton donor in catalysis.

This sequence belongs to the pancreatic ribonuclease family. As to quaternary structure, interacts (via N-terminus) with bacterial lipopolysaccharide (LPS).

The protein localises to the secreted. It is found in the lysosome. Its subcellular location is the cytoplasmic granule. In terms of biological role, ribonuclease which shows a preference for the pyrimidines uridine and cytosine. Has potent antibacterial activity against a range of Gram-positive and Gram-negative bacteria, including P.aeruginosa, A.baumanii, M.luteus, S.aureus, E.faecalis, E.faecium, S.saprophyticus and E.coli. Causes loss of bacterial membrane integrity, and also promotes agglutination of Gram-negative bacteria. Probably contributes to urinary tract sterility. Bactericidal activity is independent of RNase activity. The chain is Ribonuclease K6 (RNASE6) from Saimiri sciureus (Common squirrel monkey).